The primary structure comprises 85 residues: Large ribosomal subunit protein bL27 (85 aa).

The interval 1–22 is disordered; the sequence is MAHKKGQGSSRNGRDSPGQHRG.

The protein belongs to the bacterial ribosomal protein bL27 family.

The chain is Large ribosomal subunit protein bL27 from Anaeromyxobacter sp. (strain Fw109-5).